The sequence spans 530 residues: Meiosis 1 arrest protein (530 aa).

Residues 463 to 530 (LHPHWESRAP…SEWEKDPSRP (68 aa)) are disordered. Residues 503-516 (ASKMPAASKSSSDA) are compositionally biased toward low complexity.

The protein resides in the cytoplasm. Functionally, required for meiosis I progression during spermatogenesis. This Homo sapiens (Human) protein is Meiosis 1 arrest protein (M1AP).